We begin with the raw amino-acid sequence, 286 residues long: Beta-lactamase TEM (286 aa).

The N-terminal stretch at 1–23 is a signal peptide; sequence MSIQHFRVALIPFFAAFCLPVFA. S68 acts as the Acyl-ester intermediate in catalysis. C75 and C121 are joined by a disulfide. E166 functions as the Proton acceptor in the catalytic mechanism. Residue 232–234 participates in substrate binding; the sequence is KSG.

The protein belongs to the class-A beta-lactamase family.

It catalyses the reaction a beta-lactam + H2O = a substituted beta-amino acid. Functionally, TEM-type are the most prevalent beta-lactamases in enterobacteria; they hydrolyze the beta-lactam bond in susceptible beta-lactam antibiotics, thus conferring resistance to penicillins and cephalosporins. TEM-3 and TEM-4 are capable of hydrolyzing cefotaxime and ceftazidime. TEM-5 is capable of hydrolyzing ceftazidime. TEM-6 is capable of hydrolyzing ceftazidime and aztreonam. TEM-8/CAZ-2, TEM-16/CAZ-7 and TEM-24/CAZ-6 are markedly active against ceftazidime. IRT-4 shows resistance to beta-lactamase inhibitors. This chain is Beta-lactamase TEM (bla), found in Escherichia coli.